We begin with the raw amino-acid sequence, 344 residues long: N-lysine methyltransferase KMT5A-A (344 aa).

The tract at residues 143–176 (TSSKHRKPARRKVKRSTKRAAESKSPANRKVTDY) is disordered. A compositionally biased stretch (basic residues) spans 145-160 (SKHRKPARRKVKRSTK). The SET domain occupies 208–329 (DGMMVRFIEG…EGEELLYDYG (122 aa)). Residues 218 to 220 (KGR), Y263, and 290 to 291 (NH) contribute to the S-adenosyl-L-methionine site.

This sequence belongs to the class V-like SAM-binding methyltransferase superfamily. Histone-lysine methyltransferase family. PR/SET subfamily.

It is found in the nucleus. Its subcellular location is the chromosome. It carries out the reaction L-lysyl(20)-[histone H4] + S-adenosyl-L-methionine = N(6)-methyl-L-lysyl(20)-[histone H4] + S-adenosyl-L-homocysteine + H(+). The catalysed reaction is L-lysyl-[protein] + S-adenosyl-L-methionine = N(6)-methyl-L-lysyl-[protein] + S-adenosyl-L-homocysteine + H(+). Its function is as follows. Protein-lysine N-methyltransferase that monomethylates both histones and non-histone proteins. Specifically monomethylates 'Lys-20' of histone H4 (H4K20me1). H4K20me1 is enriched during mitosis and represents a specific tag for epigenetic transcriptional repression. Mainly functions in euchromatin regions, thereby playing a central role in the silencing of euchromatic genes. Required for cell proliferation, probably by contributing to the maintenance of proper higher-order structure of DNA during mitosis. Involved in chromosome condensation and proper cytokinesis. This Danio rerio (Zebrafish) protein is N-lysine methyltransferase KMT5A-A.